The sequence spans 309 residues: Sulfate adenylyltransferase subunit 2 (309 aa).

It belongs to the PAPS reductase family. CysD subfamily. Heterodimer composed of CysD, the smaller subunit, and CysN.

It carries out the reaction sulfate + ATP + H(+) = adenosine 5'-phosphosulfate + diphosphate. The protein operates within sulfur metabolism; hydrogen sulfide biosynthesis; sulfite from sulfate: step 1/3. Functionally, with CysN forms the ATP sulfurylase (ATPS) that catalyzes the adenylation of sulfate producing adenosine 5'-phosphosulfate (APS) and diphosphate, the first enzymatic step in sulfur assimilation pathway. APS synthesis involves the formation of a high-energy phosphoric-sulfuric acid anhydride bond driven by GTP hydrolysis by CysN coupled to ATP hydrolysis by CysD. The protein is Sulfate adenylyltransferase subunit 2 of Mycobacterium sp. (strain JLS).